Here is a 1464-residue protein sequence, read N- to C-terminus: Bridge-like lipid transfer protein family member 3B (1464 aa).

Positions 3–94 (GIIKKQILKH…DKVIMEMSTC (92 aa)) constitute a Chorein N-terminal domain. 2 disordered regions span residues 267–297 (STEQRKSMAPEPTQSSTVVASAQQVKTTQTS) and 409–436 (DHNVGSPPKSPTHASPQHTQTEKDYPLK). The span at 278–297 (PTQSSTVVASAQQVKTTQTS) shows a compositional bias: polar residues. Phosphoserine occurs at positions 414, 418, 774, 935, and 1009. Disordered stretches follow at residues 1066–1089 (SKEETPPVRTLKSQSSLSGKPKER), 1164–1183 (LQNYGETSPDAISTNSEGAQ), and 1392–1413 (QRSVTQATQTSPGVPWPSQSAN). 2 stretches are compositionally biased toward polar residues: residues 1164–1182 (LQNYGETSPDAISTNSEGA) and 1394–1413 (SVTQATQTSPGVPWPSQSAN). Residues 1418–1456 (SFDFTREQLMEENESLKQELAKAKMALAEAHLEKDALLH) adopt a coiled-coil conformation.

Monomer. Homodimer (via N-terminus). Associates with the Golgi-associated retrograde protein (GARP) complex. Interacts with GARP complex component VPS52. Interacts (via C-terminal coiled-coil domain) with STX6.

It is found in the cytoplasm. The protein resides in the cytosol. Its subcellular location is the early endosome. Tube-forming lipid transport protein which mediates the transfer of lipids between membranes at organelle contact sites. Required for retrograde traffic of vesicle clusters in the early endocytic pathway to the Golgi complex. The protein is Bridge-like lipid transfer protein family member 3B of Homo sapiens (Human).